A 333-amino-acid chain; its full sequence is Ketol-acid reductoisomerase (NADP(+)) (333 aa).

Residues 1-179 enclose the KARI N-terminal Rossmann domain; sequence MFYDDDADLT…GGTRAGVIKT (179 aa). NADP(+) contacts are provided by residues 22–25, Lys45, Ser48, Ser50, and 80–83; these read YGSQ and DTAQ. The active site involves His105. NADP(+) is bound at residue Gly131. The region spanning 180-325 is the KARI C-terminal knotted domain; sequence TFKDETETDL…KRLRDLMSWV (146 aa). The Mg(2+) site is built by Asp188, Glu192, Glu224, and Glu228. Ser249 contributes to the substrate binding site.

Belongs to the ketol-acid reductoisomerase family. The cofactor is Mg(2+).

The catalysed reaction is (2R)-2,3-dihydroxy-3-methylbutanoate + NADP(+) = (2S)-2-acetolactate + NADPH + H(+). The enzyme catalyses (2R,3R)-2,3-dihydroxy-3-methylpentanoate + NADP(+) = (S)-2-ethyl-2-hydroxy-3-oxobutanoate + NADPH + H(+). Its pathway is amino-acid biosynthesis; L-isoleucine biosynthesis; L-isoleucine from 2-oxobutanoate: step 2/4. It functions in the pathway amino-acid biosynthesis; L-valine biosynthesis; L-valine from pyruvate: step 2/4. In terms of biological role, involved in the biosynthesis of branched-chain amino acids (BCAA). Catalyzes an alkyl-migration followed by a ketol-acid reduction of (S)-2-acetolactate (S2AL) to yield (R)-2,3-dihydroxy-isovalerate. In the isomerase reaction, S2AL is rearranged via a Mg-dependent methyl migration to produce 3-hydroxy-3-methyl-2-ketobutyrate (HMKB). In the reductase reaction, this 2-ketoacid undergoes a metal-dependent reduction by NADPH to yield (R)-2,3-dihydroxy-isovalerate. The sequence is that of Ketol-acid reductoisomerase (NADP(+)) from Mycobacterium avium.